Here is a 188-residue protein sequence, read N- to C-terminus: Transmembrane protein 160 (188 aa).

Residues 1 to 96 (MGGGWWWARV…ISFMQSDMGR (96 aa)) constitute a mitochondrion transit peptide. Residues 21–53 (SLQPPQRPRSGGARGSFAPGHGPRAGASPPPVS) are disordered. Serine 48 carries the post-translational modification Phosphoserine. A run of 2 helical transmembrane segments spans residues 102–122 (FFLL…VGLA) and 135–155 (AAAG…AVGL). The segment at 168 to 188 (PEDDGAASTEGPDEAGRPPPE) is disordered.

This sequence belongs to the TMEM160 family. As to expression, expressed in peripheral sensory neurons of dorsal root ganglia (DRG).

Its subcellular location is the mitochondrion inner membrane. The polypeptide is Transmembrane protein 160 (Mus musculus (Mouse)).